A 101-amino-acid polypeptide reads, in one-letter code: NAD(P)H-quinone oxidoreductase subunit 4L, chloroplastic (101 aa).

3 helical membrane-spanning segments follow: residues 2–22 (YIEN…YGLL), 32–52 (MCLE…SNFI), and 61–81 (VIAI…LALV).

Belongs to the complex I subunit 4L family. NDH is composed of at least 16 different subunits, 5 of which are encoded in the nucleus.

It is found in the plastid. The protein resides in the chloroplast thylakoid membrane. It catalyses the reaction a plastoquinone + NADH + (n+1) H(+)(in) = a plastoquinol + NAD(+) + n H(+)(out). The enzyme catalyses a plastoquinone + NADPH + (n+1) H(+)(in) = a plastoquinol + NADP(+) + n H(+)(out). Functionally, NDH shuttles electrons from NAD(P)H:plastoquinone, via FMN and iron-sulfur (Fe-S) centers, to quinones in the photosynthetic chain and possibly in a chloroplast respiratory chain. The immediate electron acceptor for the enzyme in this species is believed to be plastoquinone. Couples the redox reaction to proton translocation, and thus conserves the redox energy in a proton gradient. The sequence is that of NAD(P)H-quinone oxidoreductase subunit 4L, chloroplastic from Mesostigma viride (Green alga).